We begin with the raw amino-acid sequence, 309 residues long: Porphobilinogen deaminase (309 aa).

An S-(dipyrrolylmethanemethyl)cysteine modification is found at cysteine 242.

Belongs to the HMBS family. As to quaternary structure, monomer. Dipyrromethane serves as cofactor.

The enzyme catalyses 4 porphobilinogen + H2O = hydroxymethylbilane + 4 NH4(+). The protein operates within porphyrin-containing compound metabolism; protoporphyrin-IX biosynthesis; coproporphyrinogen-III from 5-aminolevulinate: step 2/4. Tetrapolymerization of the monopyrrole PBG into the hydroxymethylbilane pre-uroporphyrinogen in several discrete steps. This Pseudoalteromonas atlantica (strain T6c / ATCC BAA-1087) protein is Porphobilinogen deaminase.